Reading from the N-terminus, the 42-residue chain is Small, acid-soluble spore protein L (42 aa).

The segment at 1-42 is disordered; sequence MKKKDKGRLTGGVTPQGDLEGNTHNDPKTELEERAKKSNTKR. The span at 21–36 shows a compositional bias: basic and acidic residues; that stretch reads GNTHNDPKTELEERAK.

The protein localises to the spore core. This Bacillus subtilis (strain 168) protein is Small, acid-soluble spore protein L (sspL).